The sequence spans 148 residues: D-aminoacyl-tRNA deacylase (148 aa).

Residues 137–138 (GP) carry the Gly-cisPro motif, important for rejection of L-amino acids motif.

The protein belongs to the DTD family. Homodimer.

The protein resides in the cytoplasm. The enzyme catalyses glycyl-tRNA(Ala) + H2O = tRNA(Ala) + glycine + H(+). The catalysed reaction is a D-aminoacyl-tRNA + H2O = a tRNA + a D-alpha-amino acid + H(+). Functionally, an aminoacyl-tRNA editing enzyme that deacylates mischarged D-aminoacyl-tRNAs. Also deacylates mischarged glycyl-tRNA(Ala), protecting cells against glycine mischarging by AlaRS. Acts via tRNA-based rather than protein-based catalysis; rejects L-amino acids rather than detecting D-amino acids in the active site. By recycling D-aminoacyl-tRNA to D-amino acids and free tRNA molecules, this enzyme counteracts the toxicity associated with the formation of D-aminoacyl-tRNA entities in vivo and helps enforce protein L-homochirality. The protein is D-aminoacyl-tRNA deacylase of Oenococcus oeni (strain ATCC BAA-331 / PSU-1).